The following is a 248-amino-acid chain: Pyridoxine 5'-phosphate synthase (248 aa).

Asn12 is a 3-amino-2-oxopropyl phosphate binding site. Asp14–His15 contacts 1-deoxy-D-xylulose 5-phosphate. Arg23 is a 3-amino-2-oxopropyl phosphate binding site. His48 functions as the Proton acceptor in the catalytic mechanism. 2 residues coordinate 1-deoxy-D-xylulose 5-phosphate: Arg50 and His55. Glu75 serves as the catalytic Proton acceptor. A 1-deoxy-D-xylulose 5-phosphate-binding site is contributed by Thr105. Catalysis depends on His196, which acts as the Proton donor. 3-amino-2-oxopropyl phosphate contacts are provided by residues Gly197 and Gly218 to His219.

It belongs to the PNP synthase family. Homooctamer; tetramer of dimers.

The protein resides in the cytoplasm. The enzyme catalyses 3-amino-2-oxopropyl phosphate + 1-deoxy-D-xylulose 5-phosphate = pyridoxine 5'-phosphate + phosphate + 2 H2O + H(+). The protein operates within cofactor biosynthesis; pyridoxine 5'-phosphate biosynthesis; pyridoxine 5'-phosphate from D-erythrose 4-phosphate: step 5/5. Functionally, catalyzes the complicated ring closure reaction between the two acyclic compounds 1-deoxy-D-xylulose-5-phosphate (DXP) and 3-amino-2-oxopropyl phosphate (1-amino-acetone-3-phosphate or AAP) to form pyridoxine 5'-phosphate (PNP) and inorganic phosphate. In Pseudomonas paraeruginosa (strain DSM 24068 / PA7) (Pseudomonas aeruginosa (strain PA7)), this protein is Pyridoxine 5'-phosphate synthase.